A 235-amino-acid polypeptide reads, in one-letter code: Carboxymethylenebutenolidase 2 (235 aa).

Residues C117, D173, and H204 contribute to the active site.

This sequence belongs to the dienelactone hydrolase family. In terms of assembly, monomer.

The catalysed reaction is 2-(5-oxo-2,5-dihydrofuran-2-ylidene)acetate + H2O = 4-oxohex-2-enedioate + H(+). The protein operates within aromatic compound metabolism; 3-chlorocatechol degradation. Functionally, ring cleavage of cyclic ester dienelactone to produce maleylacetate. This chain is Carboxymethylenebutenolidase 2 (tfdEII), found in Cupriavidus pinatubonensis (strain JMP 134 / LMG 1197) (Cupriavidus necator (strain JMP 134)).